Here is a 410-residue protein sequence, read N- to C-terminus: Peptidase T (410 aa).

His78 serves as a coordination point for Zn(2+). Residue Asp80 is part of the active site. Asp140 contributes to the Zn(2+) binding site. Glu174 (proton acceptor) is an active-site residue. Residues Glu175, Asp197, and His379 each coordinate Zn(2+).

It belongs to the peptidase M20B family. It depends on Zn(2+) as a cofactor.

The protein resides in the cytoplasm. It carries out the reaction Release of the N-terminal residue from a tripeptide.. Functionally, cleaves the N-terminal amino acid of tripeptides. The chain is Peptidase T from Vibrio cholerae serotype O1 (strain ATCC 39315 / El Tor Inaba N16961).